The primary structure comprises 810 residues: Phospholipase D alpha 1 (810 aa).

Positions 1–126 (MAQHLLHGTL…INGEEVDQWV (126 aa)) constitute a C2 domain. D187 provides a ligand contact to Ca(2+). The region spanning 327-366 (TMFTHHQKIVVVDSEMPSRGGSEMRRIVSFVGGIDLCDGR) is the PLD phosphodiesterase 1 domain. Residues H332, K334, and D339 contribute to the active site. An a 1,2-diacyl-sn-glycero-3-phosphate-binding site is contributed by H332. Ca(2+)-binding residues include H372 and H406. Positions 522 and 661 each coordinate a 1,2-diacyl-sn-glycero-3-phosphate. Residues 656 to 683 (FMIYVHTKMMIVDDEYIIIGSANINQRS) enclose the PLD phosphodiesterase 2 domain. Active-site residues include H661, K663, and D668. E722 serves as a coordination point for Ca(2+).

The protein belongs to the phospholipase D family. C2-PLD subfamily. In terms of assembly, interacts with GPA1. This binding inhibits PLDALPHA1 activity and is relieved by GTP. Ca(2+) serves as cofactor. Highly expressed in roots, stems and flowers, moderately in leaves, seedlings and siliques. Not detected in seeds.

The protein resides in the cytoplasm. It localises to the cell membrane. The protein localises to the mitochondrion membrane. Its subcellular location is the microsome membrane. It is found in the vacuole. The protein resides in the cytoplasmic vesicle. It localises to the clathrin-coated vesicle. The catalysed reaction is a 1,2-diacyl-sn-glycero-3-phosphocholine + H2O = a 1,2-diacyl-sn-glycero-3-phosphate + choline + H(+). Its activity is regulated as follows. Not inhibited by neomycin. Functionally, hydrolyzes glycerol-phospholipids at the terminal phosphodiesteric bond to generate phosphatidic acids (PA). Plays an important role in various cellular processes, including phytohormone action and response to stress, characterized by acidification of the cell. Involved in wound induction of jasmonic acid. May be involved in membrane lipid remodeling. Probably involved in freezing tolerance by modulating the cold-responsive genes and accumulation of osmolytes. Can use phosphatidylcholine (PC), phosphatidylethanolamine (PE) and phosphatidylglycerol (PG) as substrates, both in presence or in absence of PIP2. Its main substrate is phosphatidylcholine. Stimulates the intrinsic GTPase activity of GPA1 upon binding. Mediates the abscisic acid effects on stomata through interaction with GPA1 and the production of phosphatidic acid that bind to ABI1. Involved in seed aging and deterioration. Involved in microtubule stabilization and salt tolerance. Involved in abscisic acid-induced stomatal closure. The polypeptide is Phospholipase D alpha 1 (Arabidopsis thaliana (Mouse-ear cress)).